The chain runs to 225 residues: UPF0758 protein Shew_3481 (225 aa).

The 123-residue stretch at 102–224 folds into the MPN domain; the sequence is ILSDPDLTRD…IVSFAERGWI (123 aa). Zn(2+) contacts are provided by H173, H175, and D186. The short motif at 173 to 186 is the JAMM motif element; it reads HNHPSGGAEPSHAD.

Belongs to the UPF0758 family.

The chain is UPF0758 protein Shew_3481 from Shewanella loihica (strain ATCC BAA-1088 / PV-4).